The following is a 472-amino-acid chain: Transcription factor TGAL1 (472 aa).

Residues W136–R190 are disordered. Residues D143–D153 show a composition bias toward low complexity. The segment covering S176–K187 has biased composition (basic and acidic residues). Residues D185–R229 form the bZIP domain. The basic motif stretch occupies residues K187 to K207. The interval L213–L227 is leucine-zipper. The region spanning A252–R469 is the DOG1 domain.

The protein belongs to the bZIP family. As to quaternary structure, isoforms 1 and 2 interact with NPR2/NH2. Isoform 2 interacts with NPR1/NH1 and NPR3/NH3.

It is found in the nucleus. In terms of biological role, transcriptional regulator involved in defense response. The sequence is that of Transcription factor TGAL1 from Oryza sativa subsp. japonica (Rice).